Consider the following 142-residue polypeptide: Hemoglobin subunit alpha-A (142 aa).

The Globin domain maps to 2–142; sequence VLSAADKTNV…VGAVLTAKYR (141 aa). His-59 contacts O2. His-88 contributes to the heme b binding site.

This sequence belongs to the globin family. Heterotetramer of two alpha chains and two beta chains. In terms of tissue distribution, red blood cells.

Its function is as follows. Involved in oxygen transport from the lung to the various peripheral tissues. This Anas platyrhynchos platyrhynchos (Northern mallard) protein is Hemoglobin subunit alpha-A (HBAA).